The following is a 548-amino-acid chain: Chaperonin GroEL (548 aa).

ATP contacts are provided by residues threonine 30–proline 33, lysine 51, aspartate 87–threonine 91, glycine 415, asparagine 479–alanine 481, and aspartate 495.

It belongs to the chaperonin (HSP60) family. As to quaternary structure, forms a cylinder of 14 subunits composed of two heptameric rings stacked back-to-back. Interacts with the co-chaperonin GroES.

Its subcellular location is the cytoplasm. The catalysed reaction is ATP + H2O + a folded polypeptide = ADP + phosphate + an unfolded polypeptide.. Its function is as follows. Together with its co-chaperonin GroES, plays an essential role in assisting protein folding. The GroEL-GroES system forms a nano-cage that allows encapsulation of the non-native substrate proteins and provides a physical environment optimized to promote and accelerate protein folding. This Serratia proteamaculans (strain 568) protein is Chaperonin GroEL.